Here is a 338-residue protein sequence, read N- to C-terminus: Anthranilate phosphoribosyltransferase (338 aa).

5-phospho-alpha-D-ribose 1-diphosphate is bound by residues glycine 78, 81 to 82 (GD), threonine 86, 88 to 91 (NIST), 106 to 114 (KHGNRSVSS), and serine 118. An anthranilate-binding site is contributed by glycine 78. Serine 90 contributes to the Mg(2+) binding site. Position 109 (asparagine 109) interacts with anthranilate. Arginine 164 serves as a coordination point for anthranilate. Residues aspartate 223 and glutamate 224 each contribute to the Mg(2+) site.

Belongs to the anthranilate phosphoribosyltransferase family. As to quaternary structure, homodimer. Requires Mg(2+) as cofactor.

The catalysed reaction is N-(5-phospho-beta-D-ribosyl)anthranilate + diphosphate = 5-phospho-alpha-D-ribose 1-diphosphate + anthranilate. Its pathway is amino-acid biosynthesis; L-tryptophan biosynthesis; L-tryptophan from chorismate: step 2/5. Functionally, catalyzes the transfer of the phosphoribosyl group of 5-phosphorylribose-1-pyrophosphate (PRPP) to anthranilate to yield N-(5'-phosphoribosyl)-anthranilate (PRA). This is Anthranilate phosphoribosyltransferase from Bacillus subtilis (strain 168).